A 156-amino-acid polypeptide reads, in one-letter code: Small ribosomal subunit protein uS7 (156 aa).

The protein belongs to the universal ribosomal protein uS7 family. In terms of assembly, part of the 30S ribosomal subunit. Contacts proteins S9 and S11.

In terms of biological role, one of the primary rRNA binding proteins, it binds directly to 16S rRNA where it nucleates assembly of the head domain of the 30S subunit. Is located at the subunit interface close to the decoding center, probably blocks exit of the E-site tRNA. The polypeptide is Small ribosomal subunit protein uS7 (Desulforamulus reducens (strain ATCC BAA-1160 / DSM 100696 / MI-1) (Desulfotomaculum reducens)).